Consider the following 215-residue polypeptide: Hibernation-associated plasma protein HP-27 (215 aa).

The signal sequence occupies residues Met1 to Ser30. Positions Gly34–Gly79 are disordered. One can recognise a Collagen-like domain in the interval Gly43 to Thr81. Residues Pro44–Pro63 are compositionally biased toward pro residues. In terms of domain architecture, C1q spans His85 to Asn215. N-linked (GlcNAc...) asparagine glycosylation occurs at Asn155.

Plasma; synthesized in the liver.

The protein localises to the secreted. Functionally, plasma proteins HP-20, HP-25, HP-27 and HP-55 form a 140 kDa complex via disulfide bonds in the plasma and are hibernation specific. The protein is Hibernation-associated plasma protein HP-27 of Tamias sibiricus (Siberian chipmunk).